The following is a 131-amino-acid chain: L-ectoine synthase (131 aa).

This sequence belongs to the ectoine synthase family.

It catalyses the reaction (2S)-4-acetamido-2-aminobutanoate = L-ectoine + H2O. The protein operates within amine and polyamine biosynthesis; ectoine biosynthesis; L-ectoine from L-aspartate 4-semialdehyde: step 3/3. Catalyzes the circularization of gamma-N-acetyl-alpha,gamma-diaminobutyric acid (ADABA) to ectoine (1,4,5,6-tetrahydro-2-methyl-4-pyrimidine carboxylic acid), which is an excellent osmoprotectant. The polypeptide is L-ectoine synthase (Bordetella bronchiseptica (strain ATCC BAA-588 / NCTC 13252 / RB50) (Alcaligenes bronchisepticus)).